The following is a 70-amino-acid chain: uncharacterized protein (70 aa).

Belongs to the opacity porin family.

This is an uncharacterized protein from Haemophilus influenzae (strain ATCC 51907 / DSM 11121 / KW20 / Rd).